Consider the following 156-residue polypeptide: MADIKGKYSPRLANKRGAARLAAVQALYQMDIVGSGVMETAAEYEAYHLEKNIDGNQYLDADFQWFLAIITGVVKDQKQLDPMLHQQLSAEWSLSRLDSILRAILRAGLWELINRQDVPIAVVMNEYVDIAKAFFEGDEPKLVNAVLDSMAKKIRL.

The protein belongs to the NusB family.

Its function is as follows. Involved in transcription antitermination. Required for transcription of ribosomal RNA (rRNA) genes. Binds specifically to the boxA antiterminator sequence of the ribosomal RNA (rrn) operons. In Bartonella quintana (strain Toulouse) (Rochalimaea quintana), this protein is Transcription antitermination protein NusB.